The primary structure comprises 504 residues: Maturase K (504 aa).

Belongs to the intron maturase 2 family. MatK subfamily.

It is found in the plastid. Its subcellular location is the chloroplast. In terms of biological role, usually encoded in the trnK tRNA gene intron. Probably assists in splicing its own and other chloroplast group II introns. The polypeptide is Maturase K (Actinidia deliciosa (Kiwi)).